Consider the following 322-residue polypeptide: Serine/threonine-protein phosphatase PP1 isozyme 6 (322 aa).

At Met-1 the chain carries N-acetylmethionine. Mn(2+)-binding residues include Asp-61, His-63, Asp-89, and Asn-121. The active-site Proton donor is the His-122. The Mn(2+) site is built by His-170 and His-245. Positions 303 to 322 (GFNNNVPRPGTPPHKGGKGR) are disordered.

This sequence belongs to the PPP phosphatase family. PP-1 subfamily. Requires Mn(2+) as cofactor. In terms of tissue distribution, strongly up-regulated within developing flowers, especially in the tapetum, the developing and mature pollen and in the ovaries.

Its subcellular location is the nucleus. The protein resides in the cytoplasm. It catalyses the reaction O-phospho-L-seryl-[protein] + H2O = L-seryl-[protein] + phosphate. It carries out the reaction O-phospho-L-threonyl-[protein] + H2O = L-threonyl-[protein] + phosphate. Its activity is regulated as follows. Phosphatase activity is strongly reduced by the protein phosphatase inhibitor 2 (I-2). Its function is as follows. Serine/threonine-protein phosphatase that possesses phosphatase activity toward para-nitrophenyl phosphate (pNPP) in vitro. The chain is Serine/threonine-protein phosphatase PP1 isozyme 6 from Arabidopsis thaliana (Mouse-ear cress).